Reading from the N-terminus, the 234-residue chain is Cell adhesion molecule CEACAM15 (234 aa).

The signal sequence occupies residues Met1–Ala32. N-linked (GlcNAc...) asparagine glycans are attached at residues Asn28, Asn75, Asn151, and Asn184. Positions Pro146–Pro226 constitute an Ig-like C2-type domain. A disulfide bridge connects residues Cys165 and Cys213.

Belongs to the immunoglobulin superfamily. CEA family. As to expression, detected in placenta.

The chain is Cell adhesion molecule CEACAM15 from Mus musculus (Mouse).